Consider the following 348-residue polypeptide: Protein RecA (348 aa).

64–71 (GPESSGKT) provides a ligand contact to ATP. Residues 328-348 (DTGGAAPAQEDEAQAQEELEF) form a disordered region. Acidic residues predominate over residues 336-348 (QEDEAQAQEELEF).

This sequence belongs to the RecA family.

It localises to the cytoplasm. Functionally, can catalyze the hydrolysis of ATP in the presence of single-stranded DNA, the ATP-dependent uptake of single-stranded DNA by duplex DNA, and the ATP-dependent hybridization of homologous single-stranded DNAs. It interacts with LexA causing its activation and leading to its autocatalytic cleavage. The chain is Protein RecA from Bacillus licheniformis (strain ATCC 14580 / DSM 13 / JCM 2505 / CCUG 7422 / NBRC 12200 / NCIMB 9375 / NCTC 10341 / NRRL NRS-1264 / Gibson 46).